We begin with the raw amino-acid sequence, 131 residues long: S-adenosylmethionine decarboxylase proenzyme (131 aa).

Catalysis depends on serine 64, which acts as the Schiff-base intermediate with substrate; via pyruvic acid. Serine 64 is subject to Pyruvic acid (Ser); by autocatalysis. Histidine 69 acts as the Proton acceptor; for processing activity in catalysis. Cysteine 84 serves as the catalytic Proton donor; for catalytic activity.

The protein belongs to the prokaryotic AdoMetDC family. Type 1 subfamily. As to quaternary structure, heterotetramer of two alpha and two beta chains arranged as a dimer of alpha/beta heterodimers. Pyruvate is required as a cofactor. In terms of processing, is synthesized initially as an inactive proenzyme. Formation of the active enzyme involves a self-maturation process in which the active site pyruvoyl group is generated from an internal serine residue via an autocatalytic post-translational modification. Two non-identical subunits are generated from the proenzyme in this reaction, and the pyruvate is formed at the N-terminus of the alpha chain, which is derived from the carboxyl end of the proenzyme. The post-translation cleavage follows an unusual pathway, termed non-hydrolytic serinolysis, in which the side chain hydroxyl group of the serine supplies its oxygen atom to form the C-terminus of the beta chain, while the remainder of the serine residue undergoes an oxidative deamination to produce ammonia and the pyruvoyl group blocking the N-terminus of the alpha chain.

It carries out the reaction S-adenosyl-L-methionine + H(+) = S-adenosyl 3-(methylsulfanyl)propylamine + CO2. Its pathway is amine and polyamine biosynthesis; S-adenosylmethioninamine biosynthesis; S-adenosylmethioninamine from S-adenosyl-L-methionine: step 1/1. Catalyzes the decarboxylation of S-adenosylmethionine to S-adenosylmethioninamine (dcAdoMet), the propylamine donor required for the synthesis of the polyamines spermine and spermidine from the diamine putrescine. This chain is S-adenosylmethionine decarboxylase proenzyme, found in Thermoplasma acidophilum (strain ATCC 25905 / DSM 1728 / JCM 9062 / NBRC 15155 / AMRC-C165).